The primary structure comprises 115 residues: MSRYTGPRLKIMRALGVDLPGLGRKSMQERNQPPGQHGARKVAARKSEFGLQLMEKQKLRYNYGVTERQLRRVVLDAKRQKGVTGGKIVELLERRLDNLVFRAGFAPTTRLRANS.

This sequence belongs to the universal ribosomal protein uS4 family.

The sequence is that of Ribosomal protein uS4-like from Azoarcus sp. (strain BH72).